Consider the following 90-residue polypeptide: Small ribosomal subunit protein uS15c (90 aa).

The protein belongs to the universal ribosomal protein uS15 family. As to quaternary structure, part of the 30S ribosomal subunit.

The protein resides in the plastid. Its subcellular location is the chloroplast. This Panax ginseng (Korean ginseng) protein is Small ribosomal subunit protein uS15c (rps15).